We begin with the raw amino-acid sequence, 335 residues long: MDNSTQKDQHSGKKYSRKANKVQKGFTAAYPTQSSIPYKYQPLIIPESEKKGFNSQAKRFYHKQDDIPGPGFYNVIHQSPVFDSVSLSKKGTCTFPSMCARLDTIVSKFPAANAYTIPSRLVSKKDFSNSCSSMFQLPSYEKVLKFETPAPNQYNASDSCCKQANNVCARAGFVSKTQRGLFTVSKTGPAPGHYDVNESLVKQSPKILMSCFKSKTDRGLKLTSTGPGPGYYNPNGHPKVQKKTLIPRNPILNFSAQPLPLPPKPPLPGPGQYEIVDYTGPRKHFISSASFVSNTRRWTAGPSQPGMPGPATYRPEFPGKQSFLYNEDNKWIPVL.

A compositionally biased stretch (basic and acidic residues) spans 1 to 11 (MDNSTQKDQHS). The interval 1–20 (MDNSTQKDQHSGKKYSRKAN) is disordered. STPGR repeat units lie at residues 68–75 (PGPGFYNV), 110–118 (PAANAYTIP), 149–156 (PAPNQYNA), 188–215 (GPAPGHYDVNESLVKQSPKILMSCFKSK), 226–255 (GPGPGYYNPNGHPKVQKKTLIPRNPILNFS), 267–284 (LPGPGQYEIVDYTGPRKH), and 308–317 (PGPATYRPEF). Phosphotyrosine is present on Y73.

It belongs to the STPG1 family.

The protein localises to the cytoplasm. The protein resides in the nucleus. May positively contribute to the induction of apoptosis triggered by O(6)-methylguanine. The sequence is that of O(6)-methylguanine-induced apoptosis 2 (STPG1) from Bos taurus (Bovine).